The sequence spans 473 residues: Photosystem II CP43 reaction center protein (473 aa).

Residues 1–14 constitute a propeptide that is removed on maturation; sequence MKTLYSLRRFSHVE. Thr-15 is subject to N-acetylthreonine. Thr-15 carries the post-translational modification Phosphothreonine. Helical transmembrane passes span 69–93, 134–155, 178–200, 255–275, and 291–312; these read LFEVAHFGPEKPMYEQGLILLPHLA, LLGPEIIEESFPLFRYVWKDRN, KALYFGGVYDTWAPGGGDVRKIT, KPFAWARRALVWSGEAYLSYS, and WFNNTAYPSEFYGPTGPEASQA. Glu-367 provides a ligand contact to [CaMn4O5] cluster. The chain crosses the membrane as a helical span at residues 447–471; it reads RARAAAAGFEKGIDRDFEPVLSMTP.

Belongs to the PsbB/PsbC family. PsbC subfamily. PSII is composed of 1 copy each of membrane proteins PsbA, PsbB, PsbC, PsbD, PsbE, PsbF, PsbH, PsbI, PsbJ, PsbK, PsbL, PsbM, PsbT, PsbX, PsbY, PsbZ, Psb30/Ycf12, at least 3 peripheral proteins of the oxygen-evolving complex and a large number of cofactors. It forms dimeric complexes. It depends on Binds multiple chlorophylls and provides some of the ligands for the Ca-4Mn-5O cluster of the oxygen-evolving complex. It may also provide a ligand for a Cl- that is required for oxygen evolution. PSII binds additional chlorophylls, carotenoids and specific lipids. as a cofactor.

The protein localises to the plastid membrane. One of the components of the core complex of photosystem II (PSII). It binds chlorophyll and helps catalyze the primary light-induced photochemical processes of PSII. PSII is a light-driven water:plastoquinone oxidoreductase, using light energy to abstract electrons from H(2)O, generating O(2) and a proton gradient subsequently used for ATP formation. This Cuscuta gronovii (Common dodder) protein is Photosystem II CP43 reaction center protein.